The primary structure comprises 396 residues: Phosphopentomutase (396 aa).

Mn(2+) is bound by residues D13, D288, H293, D329, H330, and H341.

This sequence belongs to the phosphopentomutase family. Requires Mn(2+) as cofactor.

The protein resides in the cytoplasm. It carries out the reaction 2-deoxy-alpha-D-ribose 1-phosphate = 2-deoxy-D-ribose 5-phosphate. It catalyses the reaction alpha-D-ribose 1-phosphate = D-ribose 5-phosphate. The protein operates within carbohydrate degradation; 2-deoxy-D-ribose 1-phosphate degradation; D-glyceraldehyde 3-phosphate and acetaldehyde from 2-deoxy-alpha-D-ribose 1-phosphate: step 1/2. Its function is as follows. Isomerase that catalyzes the conversion of deoxy-ribose 1-phosphate (dRib-1-P) and ribose 1-phosphate (Rib-1-P) to deoxy-ribose 5-phosphate (dRib-5-P) and ribose 5-phosphate (Rib-5-P), respectively. This Clostridium beijerinckii (strain ATCC 51743 / NCIMB 8052) (Clostridium acetobutylicum) protein is Phosphopentomutase.